Consider the following 478-residue polypeptide: Glycogen synthase (478 aa).

Lys-20 provides a ligand contact to ADP-alpha-D-glucose.

The protein belongs to the glycosyltransferase 1 family. Bacterial/plant glycogen synthase subfamily.

It carries out the reaction [(1-&gt;4)-alpha-D-glucosyl](n) + ADP-alpha-D-glucose = [(1-&gt;4)-alpha-D-glucosyl](n+1) + ADP + H(+). It participates in glycan biosynthesis; glycogen biosynthesis. Synthesizes alpha-1,4-glucan chains using ADP-glucose. The chain is Glycogen synthase from Cereibacter sphaeroides (strain ATCC 17023 / DSM 158 / JCM 6121 / CCUG 31486 / LMG 2827 / NBRC 12203 / NCIMB 8253 / ATH 2.4.1.) (Rhodobacter sphaeroides).